The chain runs to 117 residues: MPRVKRGFKARRRRNKVLKLAKGFRGARSKLFRSATEAVDRALNYAFRDRKVKKRDFRALWITRINAASRLNGLSYSKLIHGLKQAQVEIDRKVLADLAVSDPKGFSEIATLAKAQF.

It belongs to the bacterial ribosomal protein bL20 family.

Functionally, binds directly to 23S ribosomal RNA and is necessary for the in vitro assembly process of the 50S ribosomal subunit. It is not involved in the protein synthesizing functions of that subunit. The polypeptide is Large ribosomal subunit protein bL20 (Geobacter sulfurreducens (strain ATCC 51573 / DSM 12127 / PCA)).